The following is a 369-amino-acid chain: Dof zinc finger protein DOF2.5 (369 aa).

The Dof-type zinc-finger motif lies at 80–134 (LNCPRCNSTNTKFCYYNNYSLTQPRYFCKGCRRYWTEGGSLRNVPVGGSSRKNKR). Residues C82, C85, C107, and C110 each contribute to the Zn(2+) site. 4 disordered regions span residues 120-149 (LRNV…TIPS), 203-224 (EGNG…YGSS), 284-304 (TDHQ…HSDH), and 322-369 (SSSI…GSSW). The span at 214 to 224 (PSSSSSVYGSS) shows a compositional bias: low complexity. The span at 284 to 297 (TDHQGLGHNSNNRS) shows a compositional bias: polar residues. Over residues 342–362 (NNNNNNNSSPNNGYWSGMFST) the composition is skewed to low complexity.

In terms of tissue distribution, expressed in the vascular system of the mother plant, but not present in the seed and embryo. In maturing siliques, found all through the funiculus connecting the placenta to the ovule, but not in the ovule.

Its subcellular location is the nucleus. In terms of biological role, transcription factor specifically involved in the maternal control of seed germination. Regulates transcription by binding to a 5'-AA[AG]G-3' consensus core sequence. May ensure the activation of a component that would trigger germination as a consequence of red light perception. The protein is Dof zinc finger protein DOF2.5 (DOF2.5) of Arabidopsis thaliana (Mouse-ear cress).